The sequence spans 355 residues: Peptide chain release factor 1 (355 aa).

Q233 bears the N5-methylglutamine mark.

The protein belongs to the prokaryotic/mitochondrial release factor family. Methylated by PrmC. Methylation increases the termination efficiency of RF1.

The protein resides in the cytoplasm. Peptide chain release factor 1 directs the termination of translation in response to the peptide chain termination codons UAG and UAA. The sequence is that of Peptide chain release factor 1 from Caldicellulosiruptor saccharolyticus (strain ATCC 43494 / DSM 8903 / Tp8T 6331).